The sequence spans 146 residues: Large ribosomal subunit protein bL19 (146 aa).

This sequence belongs to the bacterial ribosomal protein bL19 family.

Functionally, this protein is located at the 30S-50S ribosomal subunit interface and may play a role in the structure and function of the aminoacyl-tRNA binding site. In Bartonella quintana (strain Toulouse) (Rochalimaea quintana), this protein is Large ribosomal subunit protein bL19.